The primary structure comprises 117 residues: Transcription elongation factor SPT4 (117 aa).

The tract at residues 1-40 (MALETVPKDLRHLRACLLCSLVKTIDQFEYDGCDNCDAYL) is interaction with SUPT5H. The segment at 16–36 (CLLCSLVKTIDQFEYDGCDNC) adopts a C4-type zinc-finger fold.

Belongs to the SPT4 family. Interacts with SUPT5H to form the DSIF complex. DSIF interacts with RNA polymerase II and with the positive transcription elongation factor b complex (P-TEFb complex), which is composed of CDK9 and cyclin-T.

The protein resides in the nucleus. May function as a component of the DRB sensitivity-inducing factor complex (DSIF complex), which regulates transcription elongation by RNA polymerase II. Probably enhances transcriptional pausing at sites proximal to the promoter, which may in turn facilitate the assembly of an elongation competent RNA polymerase II complex. This Xenopus laevis (African clawed frog) protein is Transcription elongation factor SPT4 (supt4h1).